The primary structure comprises 336 residues: Glyoxylate reductase (336 aa).

Residues 158–161 (FGRI), 180–182 (SRT), and 239–241 (IAR) each bind NADP(+). Residues Arg241 and Glu270 contribute to the active site. The active-site Proton donor is the His288. 288–290 (HIG) is an NADP(+) binding site.

The protein belongs to the D-isomer specific 2-hydroxyacid dehydrogenase family. GyaR subfamily. In terms of assembly, homodimer.

The protein resides in the cytoplasm. It carries out the reaction glycolate + NAD(+) = glyoxylate + NADH + H(+). This chain is Glyoxylate reductase, found in Pyrococcus furiosus (strain ATCC 43587 / DSM 3638 / JCM 8422 / Vc1).